Consider the following 326-residue polypeptide: RNA/RNP complex-1-interacting phosphatase (326 aa).

Positions 1 to 28 (MNQWHYGRYSRGRDFTARAPPKKKGKNQ) are disordered. In terms of domain architecture, Tyrosine-protein phosphatase spans 59–206 (FEAKLMPEEC…LQKRRVRKNQ (148 aa)). The active-site Phosphocysteine intermediate is the C150. Residue 151–156 (THGLNR) participates in substrate binding. The active-site Proton donor/acceptor is the R156. Residues 200–258 (RRVRKNQNASASRSGGLEDSAHLTEQVHTTNKPVNKGPKKSRRGGHLESSQHVQTQSSA) form a disordered region. A compositionally biased stretch (polar residues) spans 247–258 (ESSQHVQTQSSA).

This sequence belongs to the protein-tyrosine phosphatase family. Non-receptor class dual specificity subfamily. Monomer. May interact with SFRS7 and SFRS9/SRP30C.

The protein resides in the nucleus. It localises to the nucleus speckle. Possesses RNA 5'-triphosphatase and diphosphatase activities, but displays a poor protein-tyrosine phosphatase activity. In addition, has phosphatase activity with ATP, ADP and O-methylfluorescein phosphate (in vitro). Binds to RNA. May participate in nuclear mRNA metabolism. This Rattus norvegicus (Rat) protein is RNA/RNP complex-1-interacting phosphatase (Dusp11).